Here is a 614-residue protein sequence, read N- to C-terminus: Elongation factor 4 (614 aa).

Positions 10-192 constitute a tr-type G domain; that stretch reads ALIRNFCIIA…EIVARIPPPV (183 aa). GTP-binding positions include 22-27 and 139-142; these read DHGKST and NKID.

Belongs to the TRAFAC class translation factor GTPase superfamily. Classic translation factor GTPase family. LepA subfamily.

The protein resides in the cell membrane. The enzyme catalyses GTP + H2O = GDP + phosphate + H(+). Its function is as follows. Required for accurate and efficient protein synthesis under certain stress conditions. May act as a fidelity factor of the translation reaction, by catalyzing a one-codon backward translocation of tRNAs on improperly translocated ribosomes. Back-translocation proceeds from a post-translocation (POST) complex to a pre-translocation (PRE) complex, thus giving elongation factor G a second chance to translocate the tRNAs correctly. Binds to ribosomes in a GTP-dependent manner. The protein is Elongation factor 4 of Thermobifida fusca (strain YX).